The sequence spans 131 residues: Small ribosomal subunit protein uS8 (131 aa).

Belongs to the universal ribosomal protein uS8 family. Part of the 30S ribosomal subunit. Contacts proteins S5 and S12.

In terms of biological role, one of the primary rRNA binding proteins, it binds directly to 16S rRNA central domain where it helps coordinate assembly of the platform of the 30S subunit. The chain is Small ribosomal subunit protein uS8 from Chlorobium phaeovibrioides (strain DSM 265 / 1930) (Prosthecochloris vibrioformis (strain DSM 265)).